Here is a 540-residue protein sequence, read N- to C-terminus: Probable quinate permease (540 aa).

The Cytoplasmic portion of the chain corresponds to 1 to 22 (MSILALVEDRPTPKEVYNWRIY). A helical membrane pass occupies residues 23–43 (LLAAVASFTSCMIGYDSAFIG). Over 44–74 (TTLALGSFREEFEFTTMEPAAVNRVSANIVS) the chain is Extracellular. The chain crosses the membrane as a helical span at residues 75-95 (CYQAGAFFGAFFAYPIGHFWG). Topologically, residues 96–97 (RK) are cytoplasmic. The chain crosses the membrane as a helical span at residues 98 to 118 (WGLLSAAAIFTLGAGLMLGAN). Over 119-130 (GDRGLGLIYGGR) the chain is Extracellular. Residues 131 to 151 (VLAGIGVGAGSNITPIYISEL) form a helical membrane-spanning segment. Topologically, residues 152-157 (APPSIR) are cytoplasmic. Residues 158–178 (GHLVGVYELGWQIGGLVGFWI) traverse the membrane as a helical segment. Over 179-193 (NYGVSETLAPSHKQW) the chain is Extracellular. The helical transmembrane segment at 194-214 (IIPFAVQLIPSGLLLIGAVFL) threads the bilayer. The Cytoplasmic segment spans residues 215-285 (RESPRWLFSS…AGTNKKVMYR (71 aa)). A helical membrane pass occupies residues 286–306 (LFLGSMLFFWQNGSGINAINY). Residues 307–325 (YSPTVFKSIGLRGTNTGMF) are Extracellular-facing. The chain crosses the membrane as a helical span at residues 326–346 (STGIFGVVKTVVTFIWLLYLI). The Cytoplasmic portion of the chain corresponds to 347–352 (DRMGRR). The chain crosses the membrane as a helical span at residues 353–373 (LLLLVGAAGASVCLWIVGAYI). The Extracellular portion of the chain corresponds to 374 to 387 (KIANPAKNGNGEMT). Residues 388–408 (GGGIAAMFFFYLYTVFYTPSW) traverse the membrane as a helical segment. At 409–456 (NGTPWVMNSEMFEPNMRSLAQACAAASNWLWNFLISRFTPQMFDKMGY) the chain is on the cytoplasmic side. Residues 457–477 (GVWFFFASLMLCSIVIVFFLI) form a helical membrane-spanning segment. Over 478–540 (PETKGIPLES…RLESVQPKEA (63 aa)) the chain is Extracellular. Residues 519-540 (IEESGYTKSGEQRLESVQPKEA) form a disordered region. Residues 528–540 (GEQRLESVQPKEA) are compositionally biased toward basic and acidic residues.

The protein belongs to the major facilitator superfamily. Sugar transporter (TC 2.A.1.1) family. As to quaternary structure, interacts with creB. Ubiquitinated. Deubiquitinated by creB, probably to control its activity or amount.

Its subcellular location is the cell membrane. Functionally, integral membrane transporter that imports quinic acid to be catabolized as a carbon source. The chain is Probable quinate permease (qutD) from Aspergillus clavatus (strain ATCC 1007 / CBS 513.65 / DSM 816 / NCTC 3887 / NRRL 1 / QM 1276 / 107).